We begin with the raw amino-acid sequence, 304 residues long: Putative S-adenosyl-L-methionine-dependent methyltransferase MAP_3385 (304 aa).

S-adenosyl-L-methionine-binding positions include aspartate 129 and 158–159 (DL).

Belongs to the UPF0677 family.

Functionally, exhibits S-adenosyl-L-methionine-dependent methyltransferase activity. In Mycolicibacterium paratuberculosis (strain ATCC BAA-968 / K-10) (Mycobacterium paratuberculosis), this protein is Putative S-adenosyl-L-methionine-dependent methyltransferase MAP_3385.